The following is a 145-amino-acid chain: Transcriptional regulator MraZ (145 aa).

SpoVT-AbrB domains lie at 5-50 (TFNH…ALPQ) and 81-124 (AHEV…DRAA).

It belongs to the MraZ family. In terms of assembly, forms oligomers.

The protein localises to the cytoplasm. The protein resides in the nucleoid. The polypeptide is Transcriptional regulator MraZ (Anaeromyxobacter dehalogenans (strain 2CP-1 / ATCC BAA-258)).